We begin with the raw amino-acid sequence, 460 residues long: ATP synthase subunit beta (460 aa).

ATP is bound at residue 150 to 157; sequence GGAGVGKT.

This sequence belongs to the ATPase alpha/beta chains family. As to quaternary structure, F-type ATPases have 2 components, CF(1) - the catalytic core - and CF(0) - the membrane proton channel. CF(1) has five subunits: alpha(3), beta(3), gamma(1), delta(1), epsilon(1). CF(0) has three main subunits: a(1), b(2) and c(9-12). The alpha and beta chains form an alternating ring which encloses part of the gamma chain. CF(1) is attached to CF(0) by a central stalk formed by the gamma and epsilon chains, while a peripheral stalk is formed by the delta and b chains.

Its subcellular location is the cell inner membrane. It carries out the reaction ATP + H2O + 4 H(+)(in) = ADP + phosphate + 5 H(+)(out). Functionally, produces ATP from ADP in the presence of a proton gradient across the membrane. The catalytic sites are hosted primarily by the beta subunits. The chain is ATP synthase subunit beta from Pectobacterium atrosepticum (strain SCRI 1043 / ATCC BAA-672) (Erwinia carotovora subsp. atroseptica).